Consider the following 102-residue polypeptide: Small ribosomal subunit protein uS10 (102 aa).

Belongs to the universal ribosomal protein uS10 family. In terms of assembly, part of the 30S ribosomal subunit.

Its function is as follows. Involved in the binding of tRNA to the ribosomes. In Streptococcus uberis (strain ATCC BAA-854 / 0140J), this protein is Small ribosomal subunit protein uS10.